A 118-amino-acid chain; its full sequence is Probable mitochondrial pyruvate carrier 2 (118 aa).

3 consecutive transmembrane segments (helical) span residues Val19–Ile35, Tyr50–Ile66, and Tyr72–Val94.

This sequence belongs to the mitochondrial pyruvate carrier (MPC) (TC 2.A.105) family. In terms of assembly, the functional 150 kDa pyruvate import complex is a heteromer of mpc1 and mpc2.

The protein localises to the mitochondrion inner membrane. In terms of biological role, mediates the uptake of pyruvate into mitochondria. The polypeptide is Probable mitochondrial pyruvate carrier 2 (Schizosaccharomyces pombe (strain 972 / ATCC 24843) (Fission yeast)).